A 181-amino-acid polypeptide reads, in one-letter code: Acireductone dioxygenase (181 aa).

H97, H99, E103, and H141 together coordinate Fe(2+). Positions 97, 99, 103, and 141 each coordinate Ni(2+).

Belongs to the acireductone dioxygenase (ARD) family. As to quaternary structure, monomer. Fe(2+) serves as cofactor. The cofactor is Ni(2+).

It catalyses the reaction 1,2-dihydroxy-5-(methylsulfanyl)pent-1-en-3-one + O2 = 3-(methylsulfanyl)propanoate + CO + formate + 2 H(+). The enzyme catalyses 1,2-dihydroxy-5-(methylsulfanyl)pent-1-en-3-one + O2 = 4-methylsulfanyl-2-oxobutanoate + formate + 2 H(+). It functions in the pathway amino-acid biosynthesis; L-methionine biosynthesis via salvage pathway; L-methionine from S-methyl-5-thio-alpha-D-ribose 1-phosphate: step 5/6. In terms of biological role, catalyzes 2 different reactions between oxygen and the acireductone 1,2-dihydroxy-3-keto-5-methylthiopentene (DHK-MTPene) depending upon the metal bound in the active site. Fe-containing acireductone dioxygenase (Fe-ARD) produces formate and 2-keto-4-methylthiobutyrate (KMTB), the alpha-ketoacid precursor of methionine in the methionine recycle pathway. Ni-containing acireductone dioxygenase (Ni-ARD) produces methylthiopropionate, carbon monoxide and formate, and does not lie on the methionine recycle pathway. In Pseudomonas paraeruginosa (strain DSM 24068 / PA7) (Pseudomonas aeruginosa (strain PA7)), this protein is Acireductone dioxygenase.